The primary structure comprises 712 residues: Envelope glycoprotein gp160 (712 aa).

A signal peptide spans 1 to 24; it reads MCGRNQLFVASLLASACLIYCVQY. Residues 25–673 are Extracellular-facing; the sequence is VTVFYGVPVW…LTSWIKYIQY (649 aa). An N-linked (GlcNAc...) asparagine; by host glycan is attached at Asn36. A disulfide bridge connects residues Cys43 and Cys56. Residues Asn69, Asn78, Asn113, Asn119, Asn131, Asn137, Asn145, Asn160, Asn173, Asn200, Asn232, Asn235, Asn242, Asn266, Asn272, Asn283, Asn294, Asn304, Asn359, Asn392, Asn402, Asn405, Asn442, Asn457, and Asn460 are each glycosylated (N-linked (GlcNAc...) asparagine; by host). 5 disulfides stabilise this stretch: Cys100/Cys208, Cys107/Cys199, Cys112/Cys157, Cys221/Cys251, and Cys231/Cys243. The interval 112–156 is V1; sequence CNSTTAKNTTSTPTTTTTANTTIGENSSCIRTDNCTGLGEEEMVD. The interval 157-199 is V2; sequence CQFNMTGLERDKKKLYNETWYSKDVVCESKDTKKEKTCYMNHC. Residues 299 to 331 form a V3 region; it reads CKRPGNKTVVPITLMSGLVFHSQPINRRPRQAW. An intrachain disulfide couples Cys299 to Cys332. Cystine bridges form between Cys384–Cys441 and Cys391–Cys414. Positions 391-414 are V4; the sequence is CNMTWFLNWVENRTNQTQHNYVPC. Residues 457–463 are V5; that stretch reads NQTNITF. Positions 506-526 are fusion peptide; that stretch reads GVFVLGFLGFLTTAGAAMGAA. Residues 569–585 form an immunosuppression region; it reads LQARVTAIEKYLKDQAQ. Asn605, Asn614, and Asn630 each carry an N-linked (GlcNAc...) asparagine; by host glycan. Positions 614–646 form a coiled coil; sequence NITWQEWEQRIRNLEANISESLEQAQIQQEKNM. The segment at 651–672 is MPER; binding to GalCer; it reads KLNSWDVFSNWFDLTSWIKYIQ. Residues 674 to 694 traverse the membrane as a helical segment; it reads GVYIVVGIIVLRMVIYVVQML. Residues 695 to 712 are Cytoplasmic-facing; the sequence is SRLRKGYRPVFSSPPAYS. Positions 701 to 704 match the YXXV motif; contains endocytosis signal motif; sequence YRPV.

The mature envelope protein (Env) consists of a homotrimer of non-covalently associated gp120-gp41 heterodimers. The resulting complex protrudes from the virus surface as a spike. There seems to be as few as 10 spikes on the average virion. Interacts with human CD4, CCR5 and CXCR4, to form a P4HB/PDI-CD4-CXCR4-gp120 complex. Gp120 also interacts with the C-type lectins CD209/DC-SIGN and CLEC4M/DC-SIGNR (collectively referred to as DC-SIGN(R)). Gp120 and gp41 interact with GalCer. As to quaternary structure, the mature envelope protein (Env) consists of a homotrimer of non-covalently associated gp120-gp41 heterodimers. The resulting complex protrudes from the virus surface as a spike. There seems to be as few as 10 spikes on the average virion. In terms of processing, specific enzymatic cleavages in vivo yield mature proteins. Envelope glycoproteins are synthesized as an inactive precursor that is heavily N-glycosylated and processed likely by host cell furin in the Golgi to yield the mature SU and TM proteins. The cleavage site between SU and TM requires the minimal sequence [KR]-X-[KR]-R.

The protein resides in the virion membrane. It is found in the host cell membrane. Its subcellular location is the host endosome membrane. The surface protein gp120 (SU) attaches the virus to the host lymphoid cell by binding to the primary receptor CD4. This interaction induces a structural rearrangement creating a high affinity binding site for a chemokine coreceptor like CXCR4 and/or CCR5. This peculiar 2 stage receptor-interaction strategy allows gp120 to maintain the highly conserved coreceptor-binding site in a cryptic conformation, protected from neutralizing antibodies. Since CD4 also displays a binding site for the disulfide-isomerase P4HB/PDI, a P4HB/PDI-CD4-CXCR4-gp120 complex may form. In that complex, P4HB/PDI could reach and reduce gp120 disulfide bonds, causing major conformational changes in gp120. TXN, another PDI family member could also be involved in disulfide rearrangements in Env during fusion. These changes are transmitted to the transmembrane protein gp41 and are thought to activate its fusogenic potential by unmasking its fusion peptide. Its function is as follows. The surface protein gp120 is a ligand for CD209/DC-SIGN and CLEC4M/DC-SIGNR, which are respectively found on dendritic cells (DCs), and on endothelial cells of liver sinusoids and lymph node sinuses. These interactions allow capture of viral particles at mucosal surfaces by these cells and subsequent transmission to permissive cells. DCs are professional antigen presenting cells, critical for host immunity by inducing specific immune responses against a broad variety of pathogens. They act as sentinels in various tissues where they take up antigen, process it, and present it to T-cells following migration to lymphoid organs. HIV subverts the migration properties of dendritic cells to gain access to CD4+ T-cells in lymph nodes. Virus transmission to permissive T-cells occurs either in trans (without DCs infection, through viral capture and transmission), or in cis (following DCs productive infection, through the usual CD4-gp120 interaction), thereby inducing a robust infection. In trans infection, bound virions remain infectious over days and it is proposed that they are not degraded, but protected in non-lysosomal acidic organelles within the DCs close to the cell membrane thus contributing to the viral infectious potential during DCs' migration from the periphery to the lymphoid tissues. On arrival at lymphoid tissues, intact virions recycle back to DCs' cell surface allowing virus transmission to CD4+ T-cells. Virion capture also seems to lead to MHC-II-restricted viral antigen presentation, and probably to the activation of HIV-specific CD4+ cells. In terms of biological role, the transmembrane protein gp41 (TM) acts as a class I viral fusion protein. Under the current model, the protein has at least 3 conformational states: pre-fusion native state, pre-hairpin intermediate state, and post-fusion hairpin state. During fusion of viral and target intracellular membranes, the coiled coil regions (heptad repeats) assume a trimer-of-hairpins structure, positioning the fusion peptide in close proximity to the C-terminal region of the ectodomain. The formation of this structure appears to drive apposition and subsequent fusion of viral and target cell membranes. Complete fusion occurs in host cell endosomes and is dynamin-dependent, however some lipid transfer might occur at the plasma membrane. The virus undergoes clathrin-dependent internalization long before endosomal fusion, thus minimizing the surface exposure of conserved viral epitopes during fusion and reducing the efficacy of inhibitors targeting these epitopes. Membranes fusion leads to delivery of the nucleocapsid into the cytoplasm. Functionally, the envelope glycoprotein gp160 precursor down-modulates cell surface CD4 antigen by interacting with it in the endoplasmic reticulum and blocking its transport to the cell surface. The gp120-gp41 heterodimer seems to contribute to T-cell depletion during HIV-1 infection. The envelope glycoproteins expressed on the surface of infected cells induce apoptosis through an interaction with uninfected cells expressing the receptor (CD4) and the coreceptors CXCR4 or CCR5. This type of bystander killing may be obtained by at least three distinct mechanisms. First, the interaction between the 2 cells can induce cellular fusion followed by nuclear fusion within the syncytium. Syncytia are condemned to die from apoptosis. Second, the 2 interacting cells may not fuse entirely and simply exchange plasma membrane lipids, after a sort of hemifusion process, followed by rapid death. Third, it is possible that virus-infected cells, on the point of undergoing apoptosis, fuse with CD4-expressing cells, in which case apoptosis is rapidly transmitted from one cell to the other and thus occurs in a sort of contagious fashion. Its function is as follows. The gp120-gp41 heterodimer allows rapid transcytosis of the virus through CD4 negative cells such as simple epithelial monolayers of the intestinal, rectal and endocervical epithelial barriers. Both gp120 and gp41 specifically recognize glycosphingolipids galactosyl-ceramide (GalCer) or 3' sulfo-galactosyl-ceramide (GalS) present in the lipid rafts structures of epithelial cells. Binding to these alternative receptors allows the rapid transcytosis of the virus through the epithelial cells. This transcytotic vesicle-mediated transport of virions from the apical side to the basolateral side of the epithelial cells does not involve infection of the cells themselves. The sequence is that of Envelope glycoprotein gp160 (env) from Homo sapiens (Human).